The sequence spans 525 residues: Coronin-2A (525 aa).

WD repeat units lie at residues 80 to 120 (GHRG…LTKN), 130 to 170 (GHAR…SVIM), 178 to 217 (CHQD…VLQE), 220 to 263 (YKGH…VPVT), and 269 to 308 (GSSG…PHLN). Residues 485–524 (QMFYRQQDEIRRLRELVTQREVQAKQLELEIRNLRMNSPR) are a coiled coil.

This sequence belongs to the WD repeat coronin family. In terms of assembly, binds actin. Component of the N-Cor repressor complex, at least composed of NCOR1, NCOR2, HDAC3, TBL1X, TBL1R, CORO2A and GPS2.

The polypeptide is Coronin-2A (CORO2A) (Bos taurus (Bovine)).